The primary structure comprises 119 residues: Ribonuclease P protein component (119 aa).

Residues 1-24 form a disordered region; that stretch reads MRGSSRFRPHEKLRASDDYQRVKR. A compositionally biased stretch (basic and acidic residues) spans 8–21; sequence RPHEKLRASDDYQR.

Belongs to the RnpA family. As to quaternary structure, consists of a catalytic RNA component (M1 or rnpB) and a protein subunit.

The catalysed reaction is Endonucleolytic cleavage of RNA, removing 5'-extranucleotides from tRNA precursor.. RNaseP catalyzes the removal of the 5'-leader sequence from pre-tRNA to produce the mature 5'-terminus. It can also cleave other RNA substrates such as 4.5S RNA. The protein component plays an auxiliary but essential role in vivo by binding to the 5'-leader sequence and broadening the substrate specificity of the ribozyme. The chain is Ribonuclease P protein component from Syntrophobacter fumaroxidans (strain DSM 10017 / MPOB).